A 187-amino-acid chain; its full sequence is Protein P18, mitochondrial (187 aa).

The N-terminal 17 residues, 1–17 (MRRLSSQLMCTAAAVRF), are a transit peptide targeting the mitochondrion. The segment at 160–187 (NAAKAKADGKEHPSTLAQQQSLFDIKIQ) is disordered.

It is found in the mitochondrion inner membrane. In terms of biological role, putative RNA-binding protein. This chain is Protein P18, mitochondrial, found in Leishmania tarentolae (Sauroleishmania tarentolae).